A 415-amino-acid chain; its full sequence is MHHDKRCKESNMKIVKAEVFVTCPGRNFVTLKITTEDGITGLGDATLNGRELSVASYLQDHLCPQLIGRDAHRIEDIWQFFYKGAYWRRGPVTMSAISAVDMALWDIKAKAANMPLYQLLGGASREGVMVYCHTTGHSIDEALDDYARHQELGFKAIRVQCGIPGMKTTYGMSKGKGLAYEPATKGQWPEEQLWSTEKYLDFMPKLFDAVRNKFGFNEHLLHDMHHRLTPIEAARFGKSIEDYRMFWMEDPTPAENQECFRLIRQHTVTPIAVGEVFNSIWDCKQLIEEQLIDYIRTTLTHAGGITGMRRIADFASLYQVRTGSHGPSDLSPVCMAAALHFDLWVPNFGVQEYMGYSEQMLEVFPHNWTFDNGYMHSGDKPGLGIEFDEKLAAKYPYEPAYLPVARLEDGTLWNW.

2 residues coordinate substrate: asparagine 48 and histidine 133. Tyrosine 170 acts as the Proton donor/acceptor in catalysis. Aspartate 223 provides a ligand contact to Mg(2+). Histidine 225 (proton donor/acceptor) is an active-site residue. Residues glutamate 249 and glutamate 275 each coordinate Mg(2+). Positions 275, 296, 325, 329, and 352 each coordinate substrate.

This sequence belongs to the mandelate racemase/muconate lactonizing enzyme family. GalD subfamily. Mg(2+) is required as a cofactor.

The enzyme catalyses D-mannonate = 2-dehydro-3-deoxy-D-gluconate + H2O. Functionally, has low D-mannonate dehydratase activity (in vitro), suggesting that this is not a physiological substrate and that it has no significant role in D-mannonate degradation in vivo. Has no detectable activity with a panel of 70 other acid sugars (in vitro). The chain is D-galactonate dehydratase family member RspA (rspA) from Escherichia coli (strain MS 21-1).